The sequence spans 405 residues: Tryptophan synthase beta chain (405 aa).

K98 is subject to N6-(pyridoxal phosphate)lysine.

The protein belongs to the TrpB family. As to quaternary structure, tetramer of two alpha and two beta chains. Requires pyridoxal 5'-phosphate as cofactor.

The enzyme catalyses (1S,2R)-1-C-(indol-3-yl)glycerol 3-phosphate + L-serine = D-glyceraldehyde 3-phosphate + L-tryptophan + H2O. It functions in the pathway amino-acid biosynthesis; L-tryptophan biosynthesis; L-tryptophan from chorismate: step 5/5. Its function is as follows. The beta subunit is responsible for the synthesis of L-tryptophan from indole and L-serine. This Xanthomonas oryzae pv. oryzae (strain PXO99A) protein is Tryptophan synthase beta chain.